Here is a 912-residue protein sequence, read N- to C-terminus: Tubulin polyglutamylase TTLL7 (912 aa).

The 353-residue stretch at lysine 38–alanine 390 folds into the TTL domain. Residues lysine 160, methionine 166 to glycine 167, glutamine 188 to isoleucine 191, and lysine 201 to aspartate 203 each bind ATP. Residue arginine 227 coordinates L-glutamate. Threonine 249 to asparagine 250 contributes to the ATP binding site. L-glutamate-binding residues include tyrosine 251, serine 252, and lysine 271. The Mg(2+) site is built by aspartate 336, glutamate 349, and asparagine 351. An L-glutamate-binding site is contributed by lysine 367. The segment at asparagine 388 to histidine 450 is c-MTBD region. 2 disordered regions span residues tyrosine 547–lysine 570 and proline 658–threonine 688. Positions serine 549 to serine 563 are enriched in low complexity. Polar residues predominate over residues threonine 659–serine 671.

Belongs to the tubulin--tyrosine ligase family. Interacts with both alpha- and beta-tubulin (via C-terminal tubulin tails). It depends on Mg(2+) as a cofactor. In terms of tissue distribution, highly expressed in brain, testis and trachea. Expressed in brain, heart, kidney, liver, lung, muscle and trachea. In the brain, highly expressed in hippocampus, thalamus, olfactory bulb and cerebellum cortex, corpus callosum and striatum.

It is found in the cell projection. It localises to the cilium. Its subcellular location is the cytoplasm. The protein localises to the cytoskeleton. The protein resides in the cilium basal body. It is found in the dendrite. It localises to the perikaryon. The enzyme catalyses L-glutamyl-[protein] + L-glutamate + ATP = gamma-L-glutamyl-L-glutamyl-[protein] + ADP + phosphate + H(+). It carries out the reaction (L-glutamyl)(n)-gamma-L-glutamyl-L-glutamyl-[protein] + L-glutamate + ATP = (L-glutamyl)(n+1)-gamma-L-glutamyl-L-glutamyl-[protein] + ADP + phosphate + H(+). Polyglutamylase which modifies tubulin, generating polyglutamate side chains of variable lengths on the gamma-carboxyl group of specific glutamate residues within the C-terminal tail of tubulin. Mediates both ATP-dependent initiation and elongation steps of the polyglutamylation reaction. Preferentially modifies the beta-tubulin tail over an alpha-tail. Competes with monoglycylase TTLL3 for modification site on beta-tubulin substrate, thereby creating an anticorrelation between glycylation and glutamylation reactions. Required for neurite growth; responsible for the strong increase in tubulin polyglutamylation during postnatal neuronal maturation. This chain is Tubulin polyglutamylase TTLL7, found in Mus musculus (Mouse).